The primary structure comprises 160 residues: Transcription elongation factor GreB (160 aa).

The protein belongs to the GreA/GreB family. GreB subfamily.

Functionally, necessary for efficient RNA polymerase transcription elongation past template-encoded arresting sites. The arresting sites in DNA have the property of trapping a certain fraction of elongating RNA polymerases that pass through, resulting in locked ternary complexes. Cleavage of the nascent transcript by cleavage factors such as GreA or GreB allows the resumption of elongation from the new 3'terminus. GreB releases sequences of up to 9 nucleotides in length. This chain is Transcription elongation factor GreB, found in Vibrio vulnificus (strain CMCP6).